The sequence spans 141 residues: Nucleoside diphosphate kinase (141 aa).

ATP-binding residues include Lys11, Phe59, Arg87, Thr93, Arg104, and Asn114. His117 acts as the Pros-phosphohistidine intermediate in catalysis.

This sequence belongs to the NDK family. As to quaternary structure, homotetramer. The cofactor is Mg(2+).

Its subcellular location is the cytoplasm. It carries out the reaction a 2'-deoxyribonucleoside 5'-diphosphate + ATP = a 2'-deoxyribonucleoside 5'-triphosphate + ADP. The catalysed reaction is a ribonucleoside 5'-diphosphate + ATP = a ribonucleoside 5'-triphosphate + ADP. Major role in the synthesis of nucleoside triphosphates other than ATP. The ATP gamma phosphate is transferred to the NDP beta phosphate via a ping-pong mechanism, using a phosphorylated active-site intermediate. The sequence is that of Nucleoside diphosphate kinase from Xylella fastidiosa (strain M23).